The chain runs to 142 residues: Alpha-lactalbumin (142 aa).

Residues 1 to 19 (MMSFVSLLLVGILFHATQA) form the signal peptide. Residues 20–142 (EQLTKCEVFR…KLDQWLCEKL (123 aa)) form the C-type lysozyme domain. 4 disulfide bridges follow: Cys25/Cys139, Cys47/Cys130, Cys80/Cys96, and Cys92/Cys110. The N-linked (GlcNAc...) asparagine glycan is linked to Asn64. Residues Lys98, Asp101, Asp103, Asp106, and Asp107 each contribute to the Ca(2+) site.

This sequence belongs to the glycosyl hydrolase 22 family. As to quaternary structure, lactose synthase (LS) is a heterodimer of a catalytic component, beta1,4-galactosyltransferase (beta4Gal-T1) and a regulatory component, alpha-lactalbumin (LA). As to expression, mammary gland specific. Secreted in milk.

It localises to the secreted. Regulatory subunit of lactose synthase, changes the substrate specificity of galactosyltransferase in the mammary gland making glucose a good acceptor substrate for this enzyme. This enables LS to synthesize lactose, the major carbohydrate component of milk. In other tissues, galactosyltransferase transfers galactose onto the N-acetylglucosamine of the oligosaccharide chains in glycoproteins. The polypeptide is Alpha-lactalbumin (LALBA) (Bos taurus (Bovine)).